The primary structure comprises 309 residues: 2-phosphoglycerate kinase (309 aa).

The 88-residue stretch at 5–92 (NDIIVRGKSY…LWRMVLGRRP (88 aa)) folds into the ATP-cone domain.

Belongs to the 2-phosphoglycerate kinase family. A divalent metal cation is required as a cofactor.

The catalysed reaction is (2R)-2-phosphoglycerate + ATP = (2R)-2,3-bisphosphoglycerate + ADP + H(+). It functions in the pathway thermoadapter biosynthesis; cyclic 2,3-diphosphoglycerate biosynthesis; cyclic 2,3-diphosphoglycerate from 2-phospho-D-glycerate: step 1/2. Catalyzes the phosphorylation of 2-phosphoglycerate to 2,3-diphosphoglycerate. Involved in the biosynthesis of cyclic 2,3-bisphosphoglycerate, a thermoprotectant. This is 2-phosphoglycerate kinase from Methanocaldococcus jannaschii (strain ATCC 43067 / DSM 2661 / JAL-1 / JCM 10045 / NBRC 100440) (Methanococcus jannaschii).